A 469-amino-acid chain; its full sequence is ATP-dependent protease ATPase subunit HslU (469 aa).

Residues isoleucine 24, glycine 66–glutamate 71, aspartate 282, glutamate 347, and arginine 419 each bind ATP.

This sequence belongs to the ClpX chaperone family. HslU subfamily. In terms of assembly, a double ring-shaped homohexamer of HslV is capped on each side by a ring-shaped HslU homohexamer. The assembly of the HslU/HslV complex is dependent on binding of ATP.

It is found in the cytoplasm. Functionally, ATPase subunit of a proteasome-like degradation complex; this subunit has chaperone activity. The binding of ATP and its subsequent hydrolysis by HslU are essential for unfolding of protein substrates subsequently hydrolyzed by HslV. HslU recognizes the N-terminal part of its protein substrates and unfolds these before they are guided to HslV for hydrolysis. The sequence is that of ATP-dependent protease ATPase subunit HslU from Listeria welshimeri serovar 6b (strain ATCC 35897 / DSM 20650 / CCUG 15529 / CIP 8149 / NCTC 11857 / SLCC 5334 / V8).